A 357-amino-acid chain; its full sequence is Uroporphyrinogen decarboxylase (357 aa).

Residues 30-34 (RQAGR), Asp79, Tyr154, Ser209, and His336 each bind substrate.

This sequence belongs to the uroporphyrinogen decarboxylase family. Homodimer.

The protein resides in the cytoplasm. It catalyses the reaction uroporphyrinogen III + 4 H(+) = coproporphyrinogen III + 4 CO2. The protein operates within porphyrin-containing compound metabolism; protoporphyrin-IX biosynthesis; coproporphyrinogen-III from 5-aminolevulinate: step 4/4. Its function is as follows. Catalyzes the decarboxylation of four acetate groups of uroporphyrinogen-III to yield coproporphyrinogen-III. This chain is Uroporphyrinogen decarboxylase, found in Mycobacterium bovis (strain ATCC BAA-935 / AF2122/97).